The sequence spans 62 residues: Sperm protamine P1 (62 aa).

Positions 1–62 (MARYRRHSRS…RRYSRRGRRR (62 aa)) are disordered.

It belongs to the protamine P1 family. As to expression, testis.

The protein resides in the nucleus. It localises to the chromosome. Protamines substitute for histones in the chromatin of sperm during the haploid phase of spermatogenesis. They compact sperm DNA into a highly condensed, stable and inactive complex. This is Sperm protamine P1 (PRM1) from Pseudantechinus bilarni (Sandstone dibbler).